Consider the following 86-residue polypeptide: Small ribosomal subunit protein eS21 (86 aa).

The protein belongs to the eukaryotic ribosomal protein eS21 family. As to quaternary structure, component of the 40S small ribosomal subunit.

It is found in the cytoplasm. The protein localises to the cytosol. Its subcellular location is the rough endoplasmic reticulum. This chain is Small ribosomal subunit protein eS21 (RPS21), found in Suberites domuncula (Sponge).